The chain runs to 257 residues: Folate receptor alpha (257 aa).

The signal sequence occupies residues 1 to 24 (MAQRMTTQLLLLLVWVAVVGEAQT). Cystine bridges form between Cys37/Cys65, Cys57/Cys105, Cys66/Cys109, Cys89/Cys175, Cys96/Cys146, Cys135/Cys209, Cys139/Cys189, and Cys152/Cys169. A glycan (N-linked (GlcNAc...) asparagine) is linked at Asn69. Residues Asp103, Tyr107, 124-128 (WRKER), 157-162 (HKGWNW), and Ser196 each bind folate. N-linked (GlcNAc...) asparagine glycosylation is present at Asn161. N-linked (GlcNAc...) asparagine glycosylation occurs at Asn201. Residue Ser234 is the site of GPI-anchor amidated serine attachment. Positions 235–257 (GAGPWAAWPFLLSLALMLLWLLS) are cleaved as a propeptide — removed in mature form.

It belongs to the folate receptor family. The secreted form is derived from the membrane-bound form either by cleavage of the GPI anchor, or/and by proteolysis catalyzed by a metalloprotease. In terms of tissue distribution, primarily expressed in tissues of epithelial origin. Expression is increased in malignant tissues. Expressed in kidney, lung and cerebellum. Detected in placenta and thymus epithelium.

The protein localises to the cell membrane. The protein resides in the apical cell membrane. It is found in the basolateral cell membrane. Its subcellular location is the secreted. It localises to the cytoplasmic vesicle. The protein localises to the clathrin-coated vesicle. The protein resides in the endosome. Its function is as follows. Binds to folate and reduced folic acid derivatives and mediates delivery of 5-methyltetrahydrofolate and folate analogs into the interior of cells. Has high affinity for folate and folic acid analogs at neutral pH. Exposure to slightly acidic pH after receptor endocytosis triggers a conformation change that strongly reduces its affinity for folates and mediates their release. Required for normal embryonic development and normal cell proliferation. The protein is Folate receptor alpha (FOLR1) of Homo sapiens (Human).